We begin with the raw amino-acid sequence, 460 residues long: Proline--tRNA ligase (460 aa).

This sequence belongs to the class-II aminoacyl-tRNA synthetase family. ProS type 3 subfamily. As to quaternary structure, homodimer.

It is found in the cytoplasm. It catalyses the reaction tRNA(Pro) + L-proline + ATP = L-prolyl-tRNA(Pro) + AMP + diphosphate. Functionally, catalyzes the attachment of proline to tRNA(Pro) in a two-step reaction: proline is first activated by ATP to form Pro-AMP and then transferred to the acceptor end of tRNA(Pro). The polypeptide is Proline--tRNA ligase (Methanococcus maripaludis (strain DSM 14266 / JCM 13030 / NBRC 101832 / S2 / LL)).